A 600-amino-acid polypeptide reads, in one-letter code: Proton channel OTOP1 (600 aa).

The segment at 1–50 (MPGDRGALSSPAASSGSPSAAPSGIAACPPPPSPLARASPQASGPRRGAS) is disordered. At 1-56 (MPGDRGALSSPAASSGSPSAAPSGIAACPPPPSPLARASPQASGPRRGASVPQKLA) the chain is on the cytoplasmic side. The segment covering 7–27 (ALSSPAASSGSPSAAPSGIAA) has biased composition (low complexity). A helical membrane pass occupies residues 57–78 (ETLSSQYGLNVFVAGLLFLLAW). Topologically, residues 79–86 (AVHATGVG) are extracellular. The chain crosses the membrane as a helical span at residues 87–110 (KSDLLCVLTALMLLQLLWMLWYVG). Residues 111–128 (RSYMQRRLIRPKDTHAGA) are Cytoplasmic-facing. The chain crosses the membrane as a helical span at residues 129-151 (RWLRGSITLFAFITIVLGCLKVA). Topologically, residues 152–161 (YFIGFSECLS) are extracellular. A helical membrane pass occupies residues 162-186 (ATEGVFPVTHAVHTLLQVYFLWGHA). At 187–194 (KDIIMSFK) the chain is on the cytoplasmic side. A helical membrane pass occupies residues 195 to 221 (TLERFGVIHSVFTNLLLWANSVLNESK). The Extracellular portion of the chain corresponds to 222-262 (HQLNEHKERLITLGFGNITIVLDDHTPQCNCTPPALCSALS). Residues 263–288 (HGIYYLYPFNIEYQILASTMLYVLWK) traverse the membrane as a helical segment. At 289-309 (NIGRRVDSSRHQKMQCRFDGV) the chain is on the cytoplasmic side. The chain crosses the membrane as a helical span at residues 310 to 332 (LVGSVLGLTVLAATIAVVVVYMI). Over 333–342 (HIGRSKSKSE) the chain is Extracellular. The chain crosses the membrane as a helical span at residues 343 to 368 (SALIMFYLYAITVLLLMGAAGLVGSW). Over 369–386 (IYRVDEKSLDESKNPARK) the chain is Cytoplasmic. The helical transmembrane segment at 387–411 (LDADLLVATASGSWLLSWGSILAIA) threads the bilayer. The Extracellular segment spans residues 412 to 421 (CAETRPPYTW). A helical membrane pass occupies residues 422 to 442 (YNLPYSVLVIVEKYVQNIFII). The Cytoplasmic segment spans residues 443–532 (ESVHLEPEGV…QGGMKRRLLR (90 aa)). A helical transmembrane segment spans residues 533–551 (NITAFLFLCNISLWIPPAF). The Extracellular portion of the chain corresponds to 552–569 (GCRPEYDNGLEEIVFGFE). Residues 570–593 (PWIIVVNLAMPFSIFYRMHAAAAL) traverse the membrane as a helical segment. Residues 594–600 (FEVYCKI) lie on the Cytoplasmic side of the membrane.

Belongs to the otopetrin family. As to quaternary structure, homodimer. Interacts with STAT1, independently of STAT1 phosphorylation status.

Its subcellular location is the cell membrane. The protein localises to the cell projection. The protein resides in the microvillus. The enzyme catalyses H(+)(in) = H(+)(out). Activated by both acid and alkali, with proton influx in response to extracellular acid and proton efflux during alkali stimulation. Inhibited by Zn(2+); this inhibition is thought to be pH-sensitive. Currents evoked in response to mild acid (pH 6.0) stimulus may also be mildly potentiated by exposure to Zn(2+). Activated by NH(4)Cl. Functionally, proton-selective ion channel. Biphasically modulated by acid and alkali, mediating proton influx and efflux in response to extracellular acid and base stimulation, respectively. Sour taste receptor, which carries inward currents in response to extracellular acidification. Sensor for ammonium chloride (NH(4)Cl) in taste receptor cells. NH(4)Cl acts by increasing the intracellular pH, thereby generating a driving force for proton entry through OTOP1 channel. Might also participate in alkaline sensation. Plays a role in the regulation of Ca(2+) flux in response to purigenic (ATP, ADP and UDP) stimuli, leading to increase in cytosolic Ca(2+) due to influx of extracellular calcium. May play this role by inhibiting P2Y purinoceptor-mediated Ca(2+) release in a Ca(2+)-dependent manner and promote an influx of Ca(2+) in response to ATP. Through this mechanism and possibly others, plays a role in the formation and function of calcium carbonate-based structures in the vestibular system of the inner ear, called otoconia, that sense gravity and linear acceleration. In obesity, may attenuate adipose tissue inflammation, through the negative regulation of IFNG signaling, hence may play an adaptive role in the maintainance of metabolic homeostasis. Following alkali activation, may also be permeable Na(+), K(+), Cs(+) and Li(+). In Rattus norvegicus (Rat), this protein is Proton channel OTOP1.